The sequence spans 143 residues: Nucleoside diphosphate kinase (143 aa).

ATP is bound by residues Lys11, Phe59, Arg87, Thr93, Arg104, and Asn114. His117 (pros-phosphohistidine intermediate) is an active-site residue.

It belongs to the NDK family. In terms of assembly, homotetramer. The cofactor is Mg(2+).

It is found in the cytoplasm. The enzyme catalyses a 2'-deoxyribonucleoside 5'-diphosphate + ATP = a 2'-deoxyribonucleoside 5'-triphosphate + ADP. The catalysed reaction is a ribonucleoside 5'-diphosphate + ATP = a ribonucleoside 5'-triphosphate + ADP. Major role in the synthesis of nucleoside triphosphates other than ATP. The ATP gamma phosphate is transferred to the NDP beta phosphate via a ping-pong mechanism, using a phosphorylated active-site intermediate. The protein is Nucleoside diphosphate kinase of Shewanella frigidimarina (strain NCIMB 400).